Consider the following 1298-residue polypeptide: Histone-lysine N-methyltransferase EHMT1 (1298 aa).

2 disordered regions span residues Met-1 to Ala-111 and Ala-144 to Pro-192. Position 2 is an N-acetylalanine (Ala-2). Lys-22 participates in a covalent cross-link: Glycyl lysine isopeptide (Lys-Gly) (interchain with G-Cter in SUMO1); alternate. A Glycyl lysine isopeptide (Lys-Gly) (interchain with G-Cter in SUMO2); alternate cross-link involves residue Lys-22. Positions Ser-38–Ala-50 are enriched in basic and acidic residues. 2 stretches are compositionally biased toward polar residues: residues Thr-54 to Ala-67 and Ser-76 to Thr-89. Residues Val-96–Lys-105 show a composition bias toward basic and acidic residues. Residues Lys-190, Lys-199, Lys-231, Lys-234, Lys-317, and Lys-327 each participate in a glycyl lysine isopeptide (Lys-Gly) (interchain with G-Cter in SUMO2) cross-link. A disordered region spans residues Val-211–Lys-234. Basic and acidic residues predominate over residues Ala-217 to Lys-234. The tract at residues Val-339 to Tyr-479 is disordered. Over residues Leu-344–Asp-360 the composition is skewed to acidic residues. Basic and acidic residues predominate over residues Glu-373 to Gly-393. The span at Glu-394–Leu-416 shows a compositional bias: acidic residues. A Glycyl lysine isopeptide (Lys-Gly) (interchain with G-Cter in SUMO2) cross-link involves residue Lys-432. A Phosphoserine modification is found at Ser-435. Basic residues predominate over residues Pro-440–Pro-452. The segment covering Ser-460–Gly-474 has biased composition (polar residues). Ser-483 bears the Phosphoserine mark. Glycyl lysine isopeptide (Lys-Gly) (interchain with G-Cter in SUMO2) cross-links involve residues Lys-492, Lys-559, Lys-644, Lys-659, Lys-684, and Lys-731. A disordered region spans residues Lys-644–Lys-717. 8 ANK repeats span residues Phe-737–Phe-766, Asn-772–Thr-801, Asp-805–Pro-834, Glu-838–Cys-868, Gly-872–Ile-901, Glu-905–Ala-934, His-938–Leu-967, and Glu-971–Ser-1004. Residues Glu-905–Asn-907 form a histone H3K9me binding region. Phosphoserine occurs at positions 1004 and 1048. The Pre-SET domain occupies Gln-1060 to Gly-1123. Residues Cys-1062, Cys-1064, Cys-1068, Cys-1073, Cys-1075, Cys-1105, Cys-1109, Cys-1111, and Cys-1115 each coordinate Zn(2+). The 118-residue stretch at Ala-1126–Gly-1243 folds into the SET domain. S-adenosyl-L-methionine is bound by residues Met-1136 to Trp-1138, Tyr-1173, and Asn-1200 to His-1201. The segment at Asp-1162 to Asp-1181 is interaction with histone H3. Zn(2+) is bound at residue Cys-1203. An interaction with histone H3 region spans residues Tyr-1242–Arg-1245. Cys-1256 provides a ligand contact to Zn(2+). Arg-1257 serves as a coordination point for S-adenosyl-L-methionine. Zn(2+)-binding residues include Cys-1258 and Cys-1263. The disordered stretch occupies residues Gln-1274 to Leu-1298.

Belongs to the class V-like SAM-binding methyltransferase superfamily. Heterodimer; heterodimerizes with EHMT2. Interacts with WIZ and EHMT2. Part of the E2F6.com-1 complex in G0 phase composed of E2F6, MGA, MAX, TFDP1, CBX3, BAT8, EHMT1, RING1, RNF2, MBLR, L3MBTL2 and YAF2. Interacts (via ANK repeats) with RELA (when monomethylated at 'Lys-310'). Interacts with MPHOSPH8. Interacts with CDYL. Interacts with REST only in the presence of CDYL. Part of a complex containing at least CDYL, REST, WIZ, SETB1, EHMT1 and EHMT2. Interacts with BAZ2B. Widely expressed.

The protein resides in the nucleus. It localises to the chromosome. It carries out the reaction N(6)-methyl-L-lysyl(9)-[histone H3] + S-adenosyl-L-methionine = N(6),N(6)-dimethyl-L-lysyl(9)-[histone H3] + S-adenosyl-L-homocysteine + H(+). The catalysed reaction is L-lysyl(9)-[histone H3] + S-adenosyl-L-methionine = N(6)-methyl-L-lysyl(9)-[histone H3] + S-adenosyl-L-homocysteine + H(+). With respect to regulation, methyltransferase activity is inhibited by BIX-01294. Efficiently inhibited by compound E72, a BIX-01294 derivative in which the diazepane ring and the benzyl are replaced with a 3-dimethylaminopropyl and a 5-aminopentyl group at sites B and C, respectively. Histone methyltransferase that specifically mono- and dimethylates 'Lys-9' of histone H3 (H3K9me1 and H3K9me2, respectively) in euchromatin. H3K9me represents a specific tag for epigenetic transcriptional repression by recruiting HP1 proteins to methylated histones. Also weakly methylates 'Lys-27' of histone H3 (H3K27me). Also required for DNA methylation, the histone methyltransferase activity is not required for DNA methylation, suggesting that these 2 activities function independently. Probably targeted to histone H3 by different DNA-binding proteins like E2F6, MGA, MAX and/or DP1. During G0 phase, it probably contributes to silencing of MYC- and E2F-responsive genes, suggesting a role in G0/G1 transition in cell cycle. In addition to the histone methyltransferase activity, also methylates non-histone proteins: mediates dimethylation of 'Lys-373' of p53/TP53. Represses the expression of mitochondrial function-related genes, perhaps by occupying their promoter regions, working in concert with probable chromatin reader BAZ2B. The chain is Histone-lysine N-methyltransferase EHMT1 (EHMT1) from Homo sapiens (Human).